The chain runs to 178 residues: uncharacterized protein (178 aa).

2 disordered regions span residues 89–115 and 136–178; these read NEEQ…RLSI and DMPT…EIKA. Positions 98-109 are enriched in low complexity; sequence ASHGSTSSATST. Over residues 167 to 178 the composition is skewed to acidic residues; that stretch reads DSDEEEEEEIKA.

Its subcellular location is the cytoplasm. It localises to the nucleus. This is an uncharacterized protein from Schizosaccharomyces pombe (strain 972 / ATCC 24843) (Fission yeast).